The sequence spans 79 residues: Gas vesicle protein A2 (79 aa).

The interval 9–19 (LAEVLDRVLDK) is alpha helix 1. Residues 23–31 (VDVWARISL) are beta-strand 1. Residues 32 to 34 (VGI) form a beta turn region. A beta-strand 2 region spans residues 35–43 (EILTVEARV). The alpha helix 2 stretch occupies residues 48 to 67 (VDTFLHYAEEIAKIEQAELT).

Belongs to the gas vesicle GvpA family. As to quaternary structure, the gas vesicle shell is 2 nm thick and consists of a single layer of this protein. It forms helical ribs nearly perpendicular to the long axis of the vesicle.

It is found in the gas vesicle shell. In terms of biological role, gas vesicles are hollow, gas filled proteinaceous nanostructures found in several microbial planktonic microorganisms. They allow positioning of halobacteria at the optimal depth for growth in the poorly aerated shallow brine pools of their habitat. GvpA forms the gas vesicle shell. This protein can replace the p-gvpA gene in the p-vac locus and increases the critical collapse pressure (CCP) of hybrid gas vesicles from 0.66 MPa to 0.90 MPa. In stationary phase gas vesicles about 30 times more GvpA1 is found than GvpA2. Expression of 2 c-vac DNA fragments containing 2 divergently transcribed regions (gvpE-gvpF-gvpG-gvpH-gvpI-gvpJ-gvpK-gvpL-gvpM and gvpA-gvpC-gvpN-gvpO) allows H.volcanii to produce gas vesicles. All site-directed mutagenesis is tested in H.volcanii. The chain is Gas vesicle protein A2 from Halobacterium salinarum (strain ATCC 700922 / JCM 11081 / NRC-1) (Halobacterium halobium).